Here is a 330-residue protein sequence, read N- to C-terminus: Protein rlx (330 aa).

Positions 220–330 (LGEDYDKGGL…EKTRGFDLEL (111 aa)) are disordered. Basic and acidic residues-rich tracts occupy residues 237–269 (NEQR…EWAR) and 279–330 (QNRE…DLEL).

Its function is as follows. This protein is probably required for relaxation complex formation and plasmid mobilization by conjugative plasmids. This chain is Protein rlx (rlx), found in Staphylococcus aureus.